The following is a 425-amino-acid chain: uncharacterized protein (425 aa).

Residues 135-202 (KEQEILGCSH…AAQYCKYCKN (68 aa)) form a CHY-type zinc finger. The Zn(2+) site is built by Cys-142, His-144, Cys-153, Cys-156, Cys-162, Cys-165, His-166, His-172, Cys-184, Cys-187, Cys-197, Cys-200, Cys-209, Cys-212, His-225, Cys-226, Cys-229, Cys-232, His-244, Cys-245, Cys-248, Cys-251, His-260, and Cys-262. Residues 204 to 270 (MGRYYCNKCK…RCIERSTDCN (67 aa)) form a CTCHY-type zinc finger. An RING-type; atypical zinc finger spans residues 271-313 (CPICGEYMFNSRERVIFLSCSHPLHQRCHEEYIRTNYRCPTCY).

This is an uncharacterized protein from Schizosaccharomyces pombe (strain 972 / ATCC 24843) (Fission yeast).